A 153-amino-acid chain; its full sequence is SsrA-binding protein (153 aa).

The protein belongs to the SmpB family.

Its subcellular location is the cytoplasm. Required for rescue of stalled ribosomes mediated by trans-translation. Binds to transfer-messenger RNA (tmRNA), required for stable association of tmRNA with ribosomes. tmRNA and SmpB together mimic tRNA shape, replacing the anticodon stem-loop with SmpB. tmRNA is encoded by the ssrA gene; the 2 termini fold to resemble tRNA(Ala) and it encodes a 'tag peptide', a short internal open reading frame. During trans-translation Ala-aminoacylated tmRNA acts like a tRNA, entering the A-site of stalled ribosomes, displacing the stalled mRNA. The ribosome then switches to translate the ORF on the tmRNA; the nascent peptide is terminated with the 'tag peptide' encoded by the tmRNA and targeted for degradation. The ribosome is freed to recommence translation, which seems to be the essential function of trans-translation. This chain is SsrA-binding protein, found in Macrococcus caseolyticus (strain JCSC5402) (Macrococcoides caseolyticum).